We begin with the raw amino-acid sequence, 1048 residues long: Copper-dependent transcription factor 1 (1048 aa).

Positions 1–40 (MVLINDKKFACEKCIKGHRVSACTHTDRPLFEVKKKGRPS) form a DNA-binding region, copper-fist. 4 residues coordinate Zn(2+): Cys-11, Cys-14, Cys-23, and His-25. Low complexity predominate over residues 85–99 (ANESGGASATANTSA). Disordered regions lie at residues 85–117 (ANES…PTFP) and 178–273 (HSGH…RPPV). Residues 211–222 (TRNSPTSINSSE) are compositionally biased toward polar residues. The CRM-I motif lies at 348–362 (CMCGDDCSCPGCATH). Positions 455-482 (CCGGKCGCPPGECACTKQCCGCCGECTC) match the CRM-II motif. Disordered regions lie at residues 506–702 (SSCG…PLNS) and 835–876 (GPSG…WKFP). Composition is skewed to polar residues over residues 527–536 (QIPQSVSPTS), 550–565 (PVST…SFNT), 629–645 (GSMT…GVRR), 664–682 (SIQS…SNQI), and 692–702 (APSQMTAPLNS). A compositionally biased stretch (low complexity) spans 835-845 (GPSGPSAIPAT). The span at 846-868 (NIPSRHTTPQASRPLTPPESSFT) shows a compositional bias: polar residues.

It localises to the nucleus. Its subcellular location is the cytoplasm. It is found in the cell cortex. Transcription factor that regulates copper acquisition and homeostasis, and which plays a central role in fungal pathogenesis during neurologic infection. The transcriptional regulation exerted by CUF1 is intrinsically complex since it acts as a dual sensor of copper levels, responsible for expression of a set of copper-specific copper transporters, CTR1 and CTR4, at low copper concentrations, and 2 metallothioneins, CMT1 and CMT2, at high copper concentrations. Positively regulates the expression of the copper acquisition factor BIM1 under copper-limiting conditions. Also positively regulates the expression of super oxide dismutase SOD2 isoform 2 during oxidative stress and copper-limiting conditions. Negatively regulates the expression of super oxide dismutase SOD1 during copper-limiting conditions. Also regulates ATM1, an ABC transporter with functions in the iron-sulfur clusters (ISC) export machinery, during copper stress. Another target of CUF1 is the gene encoding the laccase LAC1. Binds promoters of target genes at Cu-responsive elements (CuREs) that contain a variable A/T rich 5' region followed by the core consensus sequence 5'-G(G/C)CTC(A/G)-3'. Negatively regulates capsule biosynthesis, probably via modulating iron acquisition through the high-affinity iron uptake pathway. This chain is Copper-dependent transcription factor 1, found in Cryptococcus neoformans var. grubii serotype A (strain H99 / ATCC 208821 / CBS 10515 / FGSC 9487) (Filobasidiella neoformans var. grubii).